Consider the following 279-residue polypeptide: 2-dehydro-3-deoxyphosphooctonate aldolase (279 aa).

It belongs to the KdsA family.

It localises to the cytoplasm. The catalysed reaction is D-arabinose 5-phosphate + phosphoenolpyruvate + H2O = 3-deoxy-alpha-D-manno-2-octulosonate-8-phosphate + phosphate. Its pathway is carbohydrate biosynthesis; 3-deoxy-D-manno-octulosonate biosynthesis; 3-deoxy-D-manno-octulosonate from D-ribulose 5-phosphate: step 2/3. The protein operates within bacterial outer membrane biogenesis; lipopolysaccharide biosynthesis. The protein is 2-dehydro-3-deoxyphosphooctonate aldolase of Bartonella henselae (strain ATCC 49882 / DSM 28221 / CCUG 30454 / Houston 1) (Rochalimaea henselae).